The following is a 1019-amino-acid chain: Photoactivated adenylate cyclase subunit alpha-like protein ST- (1019 aa).

The BLUF 1 domain occupies 55-148; it reads LRRLMYLSAS…GRMYGEWHMK (94 aa). The Guanylate cyclase 1 domain occupies 204–332; it reads VLTFIYLVEF…DCINTASRIT (129 aa). One can recognise a BLUF 2 domain in the interval 467–559; it reads LITLTYISQA…RVYGTPLDMT (93 aa). The 130-residue stretch at 615–744 folds into the Guanylate cyclase 2 domain; sequence VMLATDICSF…EVSARVMAVE (130 aa). Disordered regions lie at residues 801–846, 887–923, and 963–993; these read EDHL…TRPH, QIAAGGQRRSVGPGQDVARATRAHACDAGHQAPDQPA, and EGHRPEAPHQSLHPGPGDPSEQHPHRPNRAT. Over residues 821 to 834 the composition is skewed to basic residues; it reads RHQRPGPGRPRRGH.

Belongs to the adenylyl cyclase class-4/guanylyl cyclase family. Heterotetramer of two alpha and two beta subunits.

It localises to the cell projection. The protein resides in the cilium. It is found in the flagellum. This Euglena gracilis protein is Photoactivated adenylate cyclase subunit alpha-like protein ST-.